A 251-amino-acid chain; its full sequence is Adenosine 5'-phosphosulfate reductase (251 aa).

Residues C121, C122, C204, and C207 each contribute to the [4Fe-4S] cluster site. C232 serves as the catalytic Nucleophile; cysteine thiosulfonate intermediate.

It belongs to the PAPS reductase family. CysH subfamily. Requires [4Fe-4S] cluster as cofactor.

The protein localises to the cytoplasm. The catalysed reaction is [thioredoxin]-disulfide + sulfite + AMP + 2 H(+) = adenosine 5'-phosphosulfate + [thioredoxin]-dithiol. It participates in sulfur metabolism; hydrogen sulfide biosynthesis; sulfite from sulfate. Functionally, catalyzes the formation of sulfite from adenosine 5'-phosphosulfate (APS) using thioredoxin as an electron donor. In Sinorhizobium fredii (strain USDA 257), this protein is Adenosine 5'-phosphosulfate reductase.